Reading from the N-terminus, the 364-residue chain is Aminomethyltransferase (364 aa).

Belongs to the GcvT family. The glycine cleavage system is composed of four proteins: P, T, L and H.

The enzyme catalyses N(6)-[(R)-S(8)-aminomethyldihydrolipoyl]-L-lysyl-[protein] + (6S)-5,6,7,8-tetrahydrofolate = N(6)-[(R)-dihydrolipoyl]-L-lysyl-[protein] + (6R)-5,10-methylene-5,6,7,8-tetrahydrofolate + NH4(+). Its function is as follows. The glycine cleavage system catalyzes the degradation of glycine. The protein is Aminomethyltransferase of Bacillus licheniformis (strain ATCC 14580 / DSM 13 / JCM 2505 / CCUG 7422 / NBRC 12200 / NCIMB 9375 / NCTC 10341 / NRRL NRS-1264 / Gibson 46).